The following is a 494-amino-acid chain: Alpha-amylase B (494 aa).

An N-terminal signal peptide occupies residues 1–18; sequence MFLAKSIVCLALLAVANA. Gln-19 is modified (pyrrolidone carboxylic acid). A disulfide bridge connects residues Cys-46 and Cys-102. Ca(2+)-binding residues include Asn-116, Arg-165, and Asp-174. A disulfide bridge connects residues Cys-153 and Cys-167. Arg-202 is a chloride binding site. Asp-204 (nucleophile) is an active-site residue. His-208 lines the Ca(2+) pocket. Glu-241 (proton donor) is an active-site residue. Asn-304 and Arg-343 together coordinate chloride. 2 disulfides stabilise this stretch: Cys-376–Cys-382 and Cys-448–Cys-460.

The protein belongs to the glycosyl hydrolase 13 family. As to quaternary structure, monomer. Ca(2+) serves as cofactor. Requires chloride as cofactor.

It carries out the reaction Endohydrolysis of (1-&gt;4)-alpha-D-glucosidic linkages in polysaccharides containing three or more (1-&gt;4)-alpha-linked D-glucose units.. The chain is Alpha-amylase B (Amy-d) from Drosophila yakuba (Fruit fly).